The following is a 516-amino-acid chain: Putative sel1-like repeat-containing protein R850 (516 aa).

Sel1-like repeat units lie at residues 103–138 (ALTY…NMNS) and 230–265 (SISQ…KQGD).

In Acanthamoeba polyphaga (Amoeba), this protein is Putative sel1-like repeat-containing protein R850.